The following is a 296-amino-acid chain: Formamidopyrimidine-DNA glycosylase (296 aa).

The Schiff-base intermediate with DNA role is filled by proline 2. Catalysis depends on glutamate 3, which acts as the Proton donor. The Proton donor; for beta-elimination activity role is filled by lysine 58. DNA-binding residues include histidine 106, arginine 125, and lysine 167. Residues 258–294 form an FPG-type zinc finger; the sequence is RVYDRVGLPCSRPGCAGAITRIVQANRSTFFCATCQP. The active-site Proton donor; for delta-elimination activity is arginine 284.

Belongs to the FPG family. Monomer. Zn(2+) serves as cofactor.

The enzyme catalyses Hydrolysis of DNA containing ring-opened 7-methylguanine residues, releasing 2,6-diamino-4-hydroxy-5-(N-methyl)formamidopyrimidine.. It carries out the reaction 2'-deoxyribonucleotide-(2'-deoxyribose 5'-phosphate)-2'-deoxyribonucleotide-DNA = a 3'-end 2'-deoxyribonucleotide-(2,3-dehydro-2,3-deoxyribose 5'-phosphate)-DNA + a 5'-end 5'-phospho-2'-deoxyribonucleoside-DNA + H(+). Involved in base excision repair of DNA damaged by oxidation or by mutagenic agents. Acts as a DNA glycosylase that recognizes and removes damaged bases. Has a preference for oxidized purines, such as 7,8-dihydro-8-oxoguanine (8-oxoG). Has AP (apurinic/apyrimidinic) lyase activity and introduces nicks in the DNA strand. Cleaves the DNA backbone by beta-delta elimination to generate a single-strand break at the site of the removed base with both 3'- and 5'-phosphates. The polypeptide is Formamidopyrimidine-DNA glycosylase (Methylobacterium radiotolerans (strain ATCC 27329 / DSM 1819 / JCM 2831 / NBRC 15690 / NCIMB 10815 / 0-1)).